Consider the following 334-residue polypeptide: Protein-methionine-sulfoxide reductase catalytic subunit MsrP (334 aa).

A signal peptide (tat-type signal) is located at residues Met-1–Ala-44. Mo-molybdopterin contacts are provided by residues Asn-88, Tyr-91–Glu-92, Cys-146, Thr-181, Asn-233, Arg-238, and Gly-249–Lys-251.

Belongs to the MsrP family. As to quaternary structure, heterodimer of a catalytic subunit (MsrP) and a heme-binding subunit (MsrQ). Mo-molybdopterin is required as a cofactor. In terms of processing, predicted to be exported by the Tat system. The position of the signal peptide cleavage has not been experimentally proven.

The protein localises to the periplasm. The catalysed reaction is L-methionyl-[protein] + a quinone + H2O = L-methionyl-(S)-S-oxide-[protein] + a quinol. It carries out the reaction L-methionyl-[protein] + a quinone + H2O = L-methionyl-(R)-S-oxide-[protein] + a quinol. Functionally, part of the MsrPQ system that repairs oxidized periplasmic proteins containing methionine sulfoxide residues (Met-O), using respiratory chain electrons. Thus protects these proteins from oxidative-stress damage caused by reactive species of oxygen and chlorine generated by the host defense mechanisms. MsrPQ is essential for the maintenance of envelope integrity under bleach stress, rescuing a wide series of structurally unrelated periplasmic proteins from methionine oxidation, including the primary periplasmic chaperone SurA and the lipoprotein Pal. The catalytic subunit MsrP is non-stereospecific, being able to reduce both (R-) and (S-) diastereoisomers of methionine sulfoxide. The protein is Protein-methionine-sulfoxide reductase catalytic subunit MsrP of Shigella boydii serotype 18 (strain CDC 3083-94 / BS512).